The chain runs to 347 residues: Purine-rich element-binding protein gamma (347 aa).

Disordered regions lie at residues 1 to 34 (MERA…YPQA) and 133 to 169 (GHRQ…HPHS). The segment covering 9 to 24 (GGGGRGRGGKNVGGSG) has biased composition (gly residues). The DNA-binding element occupies 51–293 (AGGAAEIQEL…GIFLKVSEVR (243 aa)). Basic and acidic residues predominate over residues 134–146 (HRQEHGHSKEQGS). Phosphoserine occurs at positions 160, 163, and 339.

It belongs to the PUR DNA-binding protein family. As to expression, isoform 1 is expressed in testis and glioblastoma. Isoform 2 is expressed in fetal lung.

The protein resides in the nucleus. The protein is Purine-rich element-binding protein gamma (PURG) of Homo sapiens (Human).